The following is a 266-amino-acid chain: Undecaprenyl-diphosphatase (266 aa).

8 consecutive transmembrane segments (helical) span residues 4–24 (ILRV…PISS), 39–59 (LPIV…IIYY), 88–108 (LNLI…GIFI), 114–134 (LFTF…LFLI), 147–167 (IFFS…PGIS), 186–206 (SLEI…FLKY), 214–234 (IIFN…FGLF), and 246–266 (SKLY…YFLV).

Belongs to the UppP family.

Its subcellular location is the cell inner membrane. The catalysed reaction is di-trans,octa-cis-undecaprenyl diphosphate + H2O = di-trans,octa-cis-undecaprenyl phosphate + phosphate + H(+). Functionally, catalyzes the dephosphorylation of undecaprenyl diphosphate (UPP). Confers resistance to bacitracin. In Borrelia recurrentis (strain A1), this protein is Undecaprenyl-diphosphatase.